The chain runs to 477 residues: MIAFLLTSVLMIPHAGGHPLDTPHLPQELPPGLPNNINITFFSGMFKNVESVAEIFDCLGPHFTWLQAVFTNFPVLIQFVNGMKCVAGLCPRDFEDYGCTCRFEMEGLPVDESDSCCFQHRRCYEEAAEMDCLQDPAKLSTEVNCVSKKIICESKDNCEHLLCTCDKAAIECLARSSLNSSLNLLDTSFCLAQTPETTIKEDLTTLLPRVVPVEPTDTSLTALSGEEAGHDQEGVGAARATSPPGSAEIVATRVTAKIVTLVPAGIKSLGLAVSSVENDPEETTEKACDRFTFLHLGSGDNMQVMPQLGEMLFCLTSRCPEEFESYGCYCGQEGRGEPRDDLDRCCLSHHCCLEQVRRLGCLLERLPWSPVVCVDHTPKCGGQSLCEKLLCACDQTAAECMTSASFNQSLKSPSRLGCPGQPAACEDSLHPVPAAPTLGSSSEEDSEEDPPQEDLGRAKRFLRKSLGPLGIGPLHGR.

Residues M1 to G17 form the signal peptide. An N-linked (GlcNAc...) asparagine glycan is attached at N38. Phospholipase A2-like regions lie at residues L76–C190, M305–C361, and C373–C425. Cystine bridges form between C85/C145, C99/C190, C101/C117, C116/C172, C123/C165, C132/C158, and C152/C163. N-linked (GlcNAc...) asparagine glycosylation occurs at N179. The N-linked (GlcNAc...) asparagine glycan is linked to N407. The segment at S428–R477 is disordered. Positions S442–Q452 are enriched in acidic residues.

Belongs to the phospholipase A2 family. In terms of assembly, interacts with OTOL1.

The protein localises to the secreted. Its function is as follows. Major protein of the otoconia, a calcium carbonate structure in the saccule and utricle of the ear. Together with OTOL1, acts as a scaffold for otoconia biomineralization: sequesters calcium and forms interconnecting fibrils between otoconia that are incorporated into the calcium crystal structure. Together with OTOL1, modulates calcite crystal morphology and growth kinetics. It is unlikely that this protein has phospholipase A2 activity. In Homo sapiens (Human), this protein is Otoconin-90.